The primary structure comprises 843 residues: Receptor-like serine/threonine-protein kinase SD1-7 (843 aa).

The N-terminal stretch at 1–31 is a signal peptide; it reads MRSVPNYHHSFFIFLILILFLAFSVSPNTLS. One can recognise a Bulb-type lectin domain in the interval 32–151; it reads ATESLTISSN…NNRLLWQSFD (120 aa). Residues 32 to 435 lie on the Extracellular side of the membrane; sequence ATESLTISSN…LEDKRIKNEK (404 aa). N-linked (GlcNAc...) asparagine glycans are attached at residues asparagine 41, asparagine 92, asparagine 116, asparagine 236, and asparagine 251. Residues 286-322 enclose the EGF-like; atypical domain; sequence PKDLCDNYKVCGNFGYCDSNSLPNCYCIKGFKPVNEQ. 4 disulfide bridges follow: cysteine 290–cysteine 302, cysteine 296–cysteine 310, cysteine 372–cysteine 397, and cysteine 376–cysteine 382. A PAN domain is found at 341–422; it reads CDGRDGFTRL…GGQDLYVRLA (82 aa). Asparagine 381 carries an N-linked (GlcNAc...) asparagine glycan. A helical transmembrane segment spans residues 436–456; the sequence is IIGSSIGVSILLLLSFVIFHF. Residues 457-843 lie on the Cytoplasmic side of the membrane; it reads WKRKQKRSIT…QITLSVIDAR (387 aa). The region spanning 519–809 is the Protein kinase domain; it reads FSNDNKLGQG…AIPQPKRPGF (291 aa). ATP is bound by residues 525-533 and lysine 547; that span reads LGQGGFGIV. At serine 553 the chain carries Phosphoserine. The tract at residues 608 to 625 is caM-binding; the sequence is TRSSNLNWQKRFDIINGI. Catalysis depends on aspartate 644, which acts as the Proton acceptor. 2 positions are modified to phosphoserine: serine 648 and serine 661. A Phosphothreonine modification is found at threonine 678. Residue serine 820 is modified to Phosphoserine.

Belongs to the protein kinase superfamily. Ser/Thr protein kinase family. In terms of assembly, interacts with PUB9, PUB13, PUB14 and PUB38. In terms of processing, autophosphorylated on serine and threonine residues. In terms of tissue distribution, mostly expressed in leaves, and, to a lower extent, in stems and flower buds.

The protein resides in the cell membrane. It catalyses the reaction L-seryl-[protein] + ATP = O-phospho-L-seryl-[protein] + ADP + H(+). The enzyme catalyses L-threonyl-[protein] + ATP = O-phospho-L-threonyl-[protein] + ADP + H(+). Its function is as follows. Involved in the regulation of cellular expansion and differentiation. Mediates subcellular relocalization of PUB9 from nucleus to plasma membrane in a protein-phosphorylation-dependent manner. May be involved in the abscisic acid-mediated signaling pathway, at least during germination. The polypeptide is Receptor-like serine/threonine-protein kinase SD1-7 (SD17) (Arabidopsis thaliana (Mouse-ear cress)).